A 920-amino-acid polypeptide reads, in one-letter code: 2-oxoadipate dehydrogenase complex component E1 (920 aa).

A disordered region spans residues 299–322; that stretch reads QGKTRGRQQVKQDGDYSTDPHSRP. Residues 308 to 322 show a composition bias toward basic and acidic residues; sequence VKQDGDYSTDPHSRP.

This sequence belongs to the alpha-ketoglutarate dehydrogenase family. The 2-oxoadipate dehydrogenase complex is composed of OADH (2-oxoadipate dehydrogenase; E1a), DLST (dihydrolipoamide succinyltransferase; E2) and DLD (dihydrolipoamide dehydrogenase; E3). E1a functional unit is a dimer. Requires thiamine diphosphate as cofactor.

It localises to the mitochondrion. The enzyme catalyses N(6)-[(R)-lipoyl]-L-lysyl-[protein] + 2-oxoadipate + H(+) = N(6)-[(R)-S(8)-glutaryldihydrolipoyl]-L-lysyl-[protein] + CO2. The protein operates within amino-acid degradation. Its function is as follows. 2-oxoadipate dehydrogenase (E1a) component of the 2-oxoadipate dehydrogenase complex (OADHC). Participates in the first step, rate limiting for the overall conversion of 2-oxoadipate (alpha-ketoadipate) to glutaryl-CoA and CO(2) catalyzed by the whole OADHC. Catalyzes the irreversible decarboxylation of 2-oxoadipate via the thiamine diphosphate (ThDP) cofactor and subsequent transfer of the decarboxylated acyl intermediate on an oxidized dihydrolipoyl group that is covalently amidated to the E2 enzyme (dihydrolipoyllysine-residue succinyltransferase or DLST). Can catalyze the decarboxylation of 2-oxoglutarate in vitro, but at a much lower rate than 2-oxoadipate. Responsible for the last step of L-lysine, L-hydroxylysine and L-tryptophan catabolism with the common product being 2-oxoadipate. The protein is 2-oxoadipate dehydrogenase complex component E1 (dhtkd1) of Danio rerio (Zebrafish).